Here is a 335-residue protein sequence, read N- to C-terminus: Foldase protein PrsA (335 aa).

The first 22 residues, 1-22 (MRSAKKLLSVLCLGVFILTFTA), serve as a signal peptide directing secretion. Cys-23 is lipidated: N-palmitoyl cysteine. Cys-23 carries S-diacylglycerol cysteine lipidation. A PpiC domain is found at 194–285 (PNTMNVSHIL…FGYHIIKINS (92 aa)).

The protein belongs to the PrsA family.

The protein localises to the cell membrane. It catalyses the reaction [protein]-peptidylproline (omega=180) = [protein]-peptidylproline (omega=0). Functionally, plays a major role in protein secretion by helping the post-translocational extracellular folding of several secreted proteins. The protein is Foldase protein PrsA of Clostridium botulinum (strain Loch Maree / Type A3).